We begin with the raw amino-acid sequence, 467 residues long: Translation initiation factor eIF2B subunit delta (467 aa).

The interval 1-106 (MGFSAEQAKK…QNPQNSPETD (106 aa)) is disordered. A phosphoserine mark is found at serine 16, serine 19, serine 21, and serine 23. Over residues 16–37 (SPVSESSSVGGTSPATASSVVS) the composition is skewed to polar residues. Threonine 27 is modified (phosphothreonine). Serine 28 and serine 37 each carry phosphoserine. Residues 51-61 (LKKARKQASRR) show a composition bias toward basic residues. Low complexity predominate over residues 84 to 102 (PNKNSNQQKKASKQNPQNS).

The protein belongs to the eIF-2B alpha/beta/delta subunits family. In terms of assembly, component of the translation initiation factor 2B (eIF2B) complex which is a heterodecamer of two sets of five different subunits: alpha, beta, gamma, delta and epsilon. Subunits alpha, beta and delta comprise a regulatory subcomplex and subunits epsilon and gamma comprise a catalytic subcomplex. Within the complex, the hexameric regulatory complex resides at the center, with the two heterodimeric catalytic subcomplexes bound on opposite sides.

Its subcellular location is the cytoplasm. It localises to the cytosol. Functionally, acts as a component of the translation initiation factor 2B (eIF2B) complex, which catalyzes the exchange of GDP for GTP on the eukaryotic initiation factor 2 (eIF2) complex gamma subunit. Its guanine nucleotide exchange factor activity is repressed when bound to eIF2 complex phosphorylated on the alpha subunit, thereby limiting the amount of methionyl-initiator methionine tRNA available to the ribosome and consequently global translation is repressed. In Schizosaccharomyces pombe (strain 972 / ATCC 24843) (Fission yeast), this protein is Translation initiation factor eIF2B subunit delta (tif224).